The primary structure comprises 276 residues: Putative serine/threonine-protein kinase R436 (276 aa).

The 261-residue stretch at 6 to 266 (YSLDKLIQNR…IKQKLNHFKT (261 aa)) folds into the Protein kinase domain. ATP-binding positions include 12–20 (IQNRKSKRI) and K35. The active-site Proton acceptor is D132.

Belongs to the protein kinase superfamily. Ser/Thr protein kinase family.

It catalyses the reaction L-seryl-[protein] + ATP = O-phospho-L-seryl-[protein] + ADP + H(+). It carries out the reaction L-threonyl-[protein] + ATP = O-phospho-L-threonyl-[protein] + ADP + H(+). In Acanthamoeba polyphaga (Amoeba), this protein is Putative serine/threonine-protein kinase R436.